We begin with the raw amino-acid sequence, 316 residues long: Pantothenate kinase (316 aa).

95-102 contacts ATP; the sequence is GSVAVGKS.

Belongs to the prokaryotic pantothenate kinase family.

The protein resides in the cytoplasm. It catalyses the reaction (R)-pantothenate + ATP = (R)-4'-phosphopantothenate + ADP + H(+). The protein operates within cofactor biosynthesis; coenzyme A biosynthesis; CoA from (R)-pantothenate: step 1/5. The polypeptide is Pantothenate kinase (Shewanella loihica (strain ATCC BAA-1088 / PV-4)).